We begin with the raw amino-acid sequence, 233 residues long: Homeobox protein ceh-30 (233 aa).

The span at 50–85 (NNSTYSHDLDPSPQSVRSDLSTSPRASSPDRNSPMS) shows a compositional bias: polar residues. 2 disordered regions span residues 50 to 93 (NNST…KART) and 206 to 233 (FQAT…SNSD). The segment at residues 88–147 (SRKARTIFTDKQLQELENTFEKQKYLSVQDRMDLAHRMGLSDTQVKTWYQNRRTKWKRQA) is a DNA-binding region (homeobox). Polar residues predominate over residues 224 to 233 (PQLDVSSNSD).

The protein localises to the nucleus. Its function is as follows. Cell-type specific anti-apoptotic transcription factor required for the sexually dimorphic survival of the male-specific CEM (cephalic male) sensory neurons during sex determination. In hermaphrodites, the homologous cells undergo programmed cell death due to transcriptional repression of ceh-30 by tra-1, the terminal regulator in the sex determination pathway. This Caenorhabditis briggsae protein is Homeobox protein ceh-30.